Reading from the N-terminus, the 473-residue chain is Ribulose bisphosphate carboxylase large chain (473 aa).

Substrate-binding residues include N116 and T166. K168 (proton acceptor) is an active-site residue. K170 is a binding site for substrate. The Mg(2+) site is built by K194, D196, and E197. K194 carries the N6-carboxylysine modification. Residue H287 is the Proton acceptor of the active site. Substrate-binding residues include R288, H320, and S372.

This sequence belongs to the RuBisCO large chain family. Type I subfamily. In terms of assembly, heterohexadecamer of 8 large chains and 8 small chains. It depends on Mg(2+) as a cofactor.

The enzyme catalyses 2 (2R)-3-phosphoglycerate + 2 H(+) = D-ribulose 1,5-bisphosphate + CO2 + H2O. It carries out the reaction D-ribulose 1,5-bisphosphate + O2 = 2-phosphoglycolate + (2R)-3-phosphoglycerate + 2 H(+). Functionally, ruBisCO catalyzes two reactions: the carboxylation of D-ribulose 1,5-bisphosphate, the primary event in carbon dioxide fixation, as well as the oxidative fragmentation of the pentose substrate. Both reactions occur simultaneously and in competition at the same active site. The protein is Ribulose bisphosphate carboxylase large chain of Thiomonas intermedia (strain K12) (Thiobacillus intermedius).